Reading from the N-terminus, the 216-residue chain is Ras-related protein RABA1c (216 aa).

20-27 (GDSGVGKS) lines the GTP pocket. Residues 42–50 (SKSTIGVEF) carry the Effector region motif. GTP contacts are provided by residues 68–72 (DTAGQ), 126–129 (NKSD), and 156–157 (SA). 2 S-geranylgeranyl cysteine lipidation sites follow: cysteine 213 and cysteine 214.

This sequence belongs to the small GTPase superfamily. Rab family.

It localises to the cell membrane. Intracellular vesicle trafficking and protein transport. The protein is Ras-related protein RABA1c (RABA1C) of Arabidopsis thaliana (Mouse-ear cress).